Consider the following 363-residue polypeptide: Branched-chain-amino-acid aminotransferase 2 (363 aa).

The residue at position 197 (K197) is an N6-(pyridoxal phosphate)lysine.

Belongs to the class-IV pyridoxal-phosphate-dependent aminotransferase family. Requires pyridoxal 5'-phosphate as cofactor.

It carries out the reaction L-leucine + 2-oxoglutarate = 4-methyl-2-oxopentanoate + L-glutamate. It catalyses the reaction L-isoleucine + 2-oxoglutarate = (S)-3-methyl-2-oxopentanoate + L-glutamate. The enzyme catalyses L-valine + 2-oxoglutarate = 3-methyl-2-oxobutanoate + L-glutamate. The protein operates within amino-acid biosynthesis; L-isoleucine biosynthesis; L-isoleucine from 2-oxobutanoate: step 4/4. Its pathway is amino-acid biosynthesis; L-leucine biosynthesis; L-leucine from 3-methyl-2-oxobutanoate: step 4/4. It functions in the pathway amino-acid biosynthesis; L-valine biosynthesis; L-valine from pyruvate: step 4/4. Inhibited by canaline. Its function is as follows. Transaminates branched-chain amino acids and ketoglutarate. The polypeptide is Branched-chain-amino-acid aminotransferase 2 (ilvK) (Bacillus subtilis (strain 168)).